Reading from the N-terminus, the 272-residue chain is ATP synthase subunit a (272 aa).

5 helical membrane passes run T41–F61, I102–V122, D147–I167, L212–W232, and A243–V263.

Belongs to the ATPase A chain family. F-type ATPases have 2 components, CF(1) - the catalytic core - and CF(0) - the membrane proton channel. CF(1) has five subunits: alpha(3), beta(3), gamma(1), delta(1), epsilon(1). CF(0) has three main subunits: a(1), b(2) and c(9-12). The alpha and beta chains form an alternating ring which encloses part of the gamma chain. CF(1) is attached to CF(0) by a central stalk formed by the gamma and epsilon chains, while a peripheral stalk is formed by the delta and b chains.

Its subcellular location is the cell inner membrane. Key component of the proton channel; it plays a direct role in the translocation of protons across the membrane. This chain is ATP synthase subunit a, found in Edwardsiella ictaluri (strain 93-146).